The sequence spans 394 residues: Elongation factor Tu (394 aa).

A tr-type G domain is found at 10–204; that stretch reads KPHINVGTIG…AMDNYIPIPE (195 aa). Residues 19–26 are G1; sequence GHVDHGKT. Residue 19 to 26 coordinates GTP; sequence GHVDHGKT. T26 provides a ligand contact to Mg(2+). Residues 60-64 are G2; it reads GITIN. Residues 81 to 84 form a G3 region; it reads DCPG. GTP is bound by residues 81-85 and 136-139; these read DCPGH and NKVD. The G4 stretch occupies residues 136-139; the sequence is NKVD. A G5 region spans residues 174–176; that stretch reads SAL.

The protein belongs to the TRAFAC class translation factor GTPase superfamily. Classic translation factor GTPase family. EF-Tu/EF-1A subfamily. Monomer.

It is found in the cytoplasm. The enzyme catalyses GTP + H2O = GDP + phosphate + H(+). Functionally, GTP hydrolase that promotes the GTP-dependent binding of aminoacyl-tRNA to the A-site of ribosomes during protein biosynthesis. This chain is Elongation factor Tu, found in Methylacidiphilum infernorum (isolate V4) (Methylokorus infernorum (strain V4)).